The sequence spans 360 residues: DnaJ homolog subfamily C member 25 (360 aa).

The helical transmembrane segment at 20 to 40 (WMLLAPLLPALLLVRPAGALV) threads the bilayer. The J domain maps to 49–124 (DCYEVLGVSR…ETRKDYDYML (76 aa)). The next 2 helical transmembrane spans lie at 150–170 (VVILVSVCAISVFQFFSWWNS) and 244–264 (LLLFQIILAPFHLCSYIVWYC).

This sequence belongs to the DNAJC25 family.

The protein localises to the membrane. In Homo sapiens (Human), this protein is DnaJ homolog subfamily C member 25 (DNAJC25).